The primary structure comprises 82 residues: Protein transport protein SBH1 (82 aa).

A disordered region spans residues 1 to 36 (MSSPTPPGGQRTLQKRKQGSSQKVAASAPKKNTNSN). The Cytoplasmic segment spans residues 1-53 (MSSPTPPGGQRTLQKRKQGSSQKVAASAPKKNTNSNNSILKIYSDEATGLRVD). Positions 19–36 (GSSQKVAASAPKKNTNSN) are enriched in polar residues. A helical transmembrane segment spans residues 54 to 74 (PLVVLFLAVGFIFSVVALHVI).

It belongs to the SEC61-beta family. Component of the heterotrimeric Sec61 complex, which is composed of SSH1, SBH1 and SSS1. Presumably three to four Sec61 heterotrimers assemble into an oligomeric ring with a central aqueous pore. In cotranslational ER import, the pore diameter varies from 9-15 A in a ribosome-free resting state to 40-60 A in a functional state when associated with the ribosome. The Sec61 complex is part of a channel-forming translocon complex whose composition seem to change dependent upon different functional states. During post-translational ER import the Sec61 complex associates with the Sec62/63 complex to form the Sec complex. SBH1 interacts OST2, OST4 and WBP1 components of the OT complex.

It is found in the endoplasmic reticulum membrane. In terms of biological role, part of the Sec61 complex, which is the major component of a channel-forming translocon complex that mediates protein translocation across the endoplasmic reticulum (ER). The functional states of the translocon complex include co- and post-translational ER import, cotranslational membrane protein integration and retrograde transport of misfolded proteins out of the ER. In the cotranslational pathway, ribosomes synthesizing presecretory proteins are targeted to the translocon by the cytosolic signal recognition particle (SRP) and its ER-localized receptor. The association of the Sec61 complex with the ribosome is mediated by the 28S rRNA of the large ribosomal subunit. SRP-independent post-translational translocation requires the association of additional factors, such as the Sec62/63 complex and KAR2. This is Protein transport protein SBH1 (SBH1) from Saccharomyces cerevisiae (strain ATCC 204508 / S288c) (Baker's yeast).